The primary structure comprises 76 residues: Exodeoxyribonuclease 7 small subunit (76 aa).

Belongs to the XseB family. In terms of assembly, heterooligomer composed of large and small subunits.

The protein localises to the cytoplasm. It carries out the reaction Exonucleolytic cleavage in either 5'- to 3'- or 3'- to 5'-direction to yield nucleoside 5'-phosphates.. Its function is as follows. Bidirectionally degrades single-stranded DNA into large acid-insoluble oligonucleotides, which are then degraded further into small acid-soluble oligonucleotides. This chain is Exodeoxyribonuclease 7 small subunit, found in Enterococcus faecalis (strain ATCC 700802 / V583).